Reading from the N-terminus, the 230-residue chain is Cytidylate kinase (230 aa).

16–24 provides a ligand contact to ATP; the sequence is GPASAGKST.

It belongs to the cytidylate kinase family. Type 1 subfamily.

It localises to the cytoplasm. The catalysed reaction is CMP + ATP = CDP + ADP. It catalyses the reaction dCMP + ATP = dCDP + ADP. This Lactobacillus johnsonii (strain CNCM I-12250 / La1 / NCC 533) protein is Cytidylate kinase.